Here is a 137-residue protein sequence, read N- to C-terminus: Ribonuclease P protein component (137 aa).

Belongs to the RnpA family. In terms of assembly, consists of a catalytic RNA component (M1 or rnpB) and a protein subunit.

It carries out the reaction Endonucleolytic cleavage of RNA, removing 5'-extranucleotides from tRNA precursor.. RNaseP catalyzes the removal of the 5'-leader sequence from pre-tRNA to produce the mature 5'-terminus. It can also cleave other RNA substrates such as 4.5S RNA. The protein component plays an auxiliary but essential role in vivo by binding to the 5'-leader sequence and broadening the substrate specificity of the ribozyme. This is Ribonuclease P protein component from Porphyromonas gingivalis (strain ATCC 33277 / DSM 20709 / CIP 103683 / JCM 12257 / NCTC 11834 / 2561).